Consider the following 1212-residue polypeptide: Dermatan-sulfate epimerase-like protein (1212 aa).

The signal sequence occupies residues methionine 1–serine 20. Residues asparagine 28, asparagine 666, asparagine 688, and asparagine 709 are each glycosylated (N-linked (GlcNAc...) asparagine). The next 2 membrane-spanning stretches (helical) occupy residues isoleucine 764 to leucine 784 and tryptophan 803 to cysteine 823. An N-linked (GlcNAc...) asparagine glycan is attached at asparagine 874.

Belongs to the dermatan-sulfate isomerase family. As to expression, expressed in different brain areas as well as in multiple other peripheral tissues.

It localises to the membrane. This is Dermatan-sulfate epimerase-like protein (DSEL) from Homo sapiens (Human).